A 274-amino-acid polypeptide reads, in one-letter code: Large ribosomal subunit protein uL2cz (274 aa).

2 disordered regions span residues 1-25 and 224-274; these read MAIH…VKSN and NPVD…RRSK. Residues 7-25 show a composition bias toward polar residues; that stretch reads KTSTPSTRNGTVDSQVKSN.

The protein belongs to the universal ribosomal protein uL2 family. As to quaternary structure, part of the 50S ribosomal subunit.

Its subcellular location is the plastid. It is found in the chloroplast. The polypeptide is Large ribosomal subunit protein uL2cz (rpl2-A) (Coffea arabica (Arabian coffee)).